Here is a 59-residue protein sequence, read N- to C-terminus: Large ribosomal subunit protein uL30 (59 aa).

The protein belongs to the universal ribosomal protein uL30 family. In terms of assembly, part of the 50S ribosomal subunit.

The sequence is that of Large ribosomal subunit protein uL30 from Pectobacterium atrosepticum (strain SCRI 1043 / ATCC BAA-672) (Erwinia carotovora subsp. atroseptica).